The chain runs to 322 residues: Ribose 1,5-bisphosphate isomerase (322 aa).

Substrate contacts are provided by residues 20 to 23 (RGAG) and arginine 63. The Proton acceptor role is filled by cysteine 133. A substrate-binding site is contributed by 135 to 137 (SKA). Aspartate 202 (proton donor) is an active-site residue. Substrate-binding positions include 212-213 (NK) and lysine 238.

Belongs to the eIF-2B alpha/beta/delta subunits family. R15P isomerase subfamily. Homohexamer; trimer of dimers.

The catalysed reaction is alpha-D-ribose 1,5-bisphosphate = D-ribulose 1,5-bisphosphate. Its activity is regulated as follows. Is highly activated in the presence of AMP, with an increase of &gt;40-fold in activity levels. Among other nucleotides, isomerase activity is slightly increased in the presence of GMP, but CMP, UMP, TMP, and NAD(+) have no effect; therefore, AMP is likely the major activator of R15P isomerase in vivo. To a lesser extent, various compounds with an adenosyl moiety, such as dAMP, adenosine, or methylthioadenosine, can also act as activators. The regulation of this enzyme by AMP prevents excess degradation of intracellular AMP by the archaeal AMP degradation pathway. Its function is as follows. Catalyzes the isomerization of ribose 1,5-bisphosphate (R15P) to ribulose 1,5-bisphosphate (RuBP), the CO(2) acceptor and substrate for RubisCO. Only accepts the alpha-anomer of D-ribose 1,5-bisphosphate as substrate, being inactive on the beta-anomer. Displays a strict substrate specificity, since other phosphorylated sugars such as R5P, ribose, G16P, G6P, G1P, FBP, F6P, and PRPP, are not substrates. Functions in an archaeal AMP degradation pathway, together with AMP phosphorylase and RubisCO. The sequence is that of Ribose 1,5-bisphosphate isomerase from Thermococcus kodakarensis (strain ATCC BAA-918 / JCM 12380 / KOD1) (Pyrococcus kodakaraensis (strain KOD1)).